The following is a 380-amino-acid chain: Protein Wnt-5a (380 aa).

A signal peptide spans 1-37 (MKKPIGILSPGVALGTAGGAMSSKFFLMALATFFSFA). The propeptide occupies 38 to 61 (QVVIEANSWWSLGMNNPVQMSEVY). C104 and C115 are disulfide-bonded. N-linked (GlcNAc...) asparagine glycans are attached at residues N114 and N120. 10 disulfide bridges follow: C154/C162, C164/C182, C238/C252, C240/C247, C309/C340, C325/C335, C339/C379, C355/C370, C357/C367, and C362/C363. S244 is lipidated: O-palmitoleoyl serine; by PORCN. Residues N312 and N326 are each glycosylated (N-linked (GlcNAc...) asparagine).

This sequence belongs to the Wnt family. Forms a soluble 1:1 complex with AFM; this prevents oligomerization and is required for prolonged biological activity. The complex with AFM may represent the physiological form in body fluids. Homooligomer; disulfide-linked, leading to inactivation. Interacts with PORCN. Interacts with WLS. Interacts with glypican GCP3. Interacts with PKD1 (via extracellular domain). Interacts with TMEM67. In terms of processing, glycosylation is necessary for secretion but not for activity. Palmitoleoylation is required for efficient binding to frizzled receptors. Depalmitoleoylation leads to Wnt signaling pathway inhibition. Post-translationally, proteolytic processing by TIKI1 and TIKI2 promotes oxidation and formation of large disulfide-bond oligomers, leading to inactivation of WNT5A. In terms of tissue distribution, expressed in a gradient at the caudal end of the embryo during gastrulation and later in the distal-most aspect of several structures that extend from the body such as the limbs and genital tubercle.

The protein resides in the secreted. The protein localises to the extracellular space. It is found in the extracellular matrix. Ligand for members of the frizzled family of seven transmembrane receptors. Can activate or inhibit canonical Wnt signaling, depending on receptor context. In the presence of FZD4, activates beta-catenin signaling. In the presence of ROR2, inhibits the canonical Wnt pathway by promoting beta-catenin degradation through a GSK3-independent pathway which involves down-regulation of beta-catenin-induced reporter gene expression. Suppression of the canonical pathway allows chondrogenesis to occur and inhibits tumor formation. Stimulates cell migration. Decreases proliferation, migration, invasiveness and clonogenicity of carcinoma cells and may act as a tumor suppressor. Mediates motility of melanoma cells. Required during embryogenesis for extension of the primary anterior-posterior axis and for outgrowth of limbs and the genital tubercle. Inhibits type II collagen expression in chondrocytes. This chain is Protein Wnt-5a (Wnt5a), found in Mus musculus (Mouse).